Reading from the N-terminus, the 490-residue chain is Argininosuccinate lyase (490 aa).

The protein belongs to the lyase 1 family. Argininosuccinate lyase subfamily.

The protein localises to the cytoplasm. The catalysed reaction is 2-(N(omega)-L-arginino)succinate = fumarate + L-arginine. It participates in amino-acid biosynthesis; L-arginine biosynthesis; L-arginine from L-ornithine and carbamoyl phosphate: step 3/3. This chain is Argininosuccinate lyase, found in Bifidobacterium longum (strain DJO10A).